Reading from the N-terminus, the 567-residue chain is Urease subunit alpha (567 aa).

One can recognise a Urease domain in the interval glycine 129–phenylalanine 567. 3 residues coordinate Ni(2+): histidine 134, histidine 136, and lysine 217. Lysine 217 is modified (N6-carboxylysine). Histidine 219 contributes to the substrate binding site. The Ni(2+) site is built by histidine 246 and histidine 272. Histidine 320 acts as the Proton donor in catalysis. A Ni(2+)-binding site is contributed by aspartate 360.

The protein belongs to the metallo-dependent hydrolases superfamily. Urease alpha subunit family. As to quaternary structure, heterotrimer of UreA (gamma), UreB (beta) and UreC (alpha) subunits. Three heterotrimers associate to form the active enzyme. Ni cation serves as cofactor. In terms of processing, carboxylation allows a single lysine to coordinate two nickel ions.

Its subcellular location is the cytoplasm. It catalyses the reaction urea + 2 H2O + H(+) = hydrogencarbonate + 2 NH4(+). It participates in nitrogen metabolism; urea degradation; CO(2) and NH(3) from urea (urease route): step 1/1. This chain is Urease subunit alpha, found in Klebsiella pneumoniae (strain 342).